We begin with the raw amino-acid sequence, 297 residues long: Small ribosomal subunit protein uS2 (297 aa).

Positions 276-297 are disordered; that stretch reads DWASSAPAEGWAGEAPATEAKW.

It belongs to the universal ribosomal protein uS2 family. As to quaternary structure, component of the small ribosomal subunit. Mature ribosomes consist of a small (40S) and a large (60S) subunit. The 40S subunit contains about 33 different proteins and 1 molecule of RNA (18S). The 60S subunit contains about 49 different proteins and 3 molecules of RNA (25S, 5.8S and 5S). Interacts with RPS21.

It localises to the cytoplasm. Its function is as follows. Required for the assembly and/or stability of the 40S ribosomal subunit. Required for the processing of the 20S rRNA-precursor to mature 18S rRNA in a late step of the maturation of 40S ribosomal subunits. The protein is Small ribosomal subunit protein uS2 of Uncinocarpus reesii (strain UAMH 1704).